Here is a 435-residue protein sequence, read N- to C-terminus: MTWRVAVLLSLVLGAGAVHIGVDDPEDGGKHWVVIVAGSNGWYNYRHQADACHAYQIIHRNGIPDEQIIVMMYDDIANNEENPTPGVVINRPNGTDVYKGVPKDYTGEDVTPENFLAVLRGDEEAVKGKGSGKVLKSGPRDHVFVYFTDHGATGILVFPNEDLHVKDLNKTIRYMYEHKMYQKMVFYIEACESGSMMNHLPDDIDVYATTAANPNESSYACYYDEERSTYLGDWYSVNWMEDSDVEDLTKETLHKQYHLVKSHTNTSHVMQYGNKSISTMKVMQFQGMKHRASSPISLPPVTHLDLTPSPDVPLTILKRKLLRTNNMKESQVLVGQIQHLLDARHIIEKSVQKIVSLLAGFGETAQKHLSERAMLTAHDCHQEAVTHFRTHCFNWHSVTYEHALRYLYVLANLCEKPYPIDRIKMAMDKVCLSHY.

The first 17 residues, 1 to 17, serve as a signal peptide directing secretion; that stretch reads MTWRVAVLLSLVLGAGA. Asn93 is a glycosylation site (N-linked (GlcNAc...) asparagine). The active site involves His150. Asn169 carries an N-linked (GlcNAc...) asparagine glycan. Cys191 serves as the catalytic Nucleophile. N-linked (GlcNAc...) asparagine glycosylation is found at Asn215, Asn265, and Asn274. Positions 326-435 are excised as a propeptide; it reads NMKESQVLVG…AMDKVCLSHY (110 aa). 2 cysteine pairs are disulfide-bonded: Cys380–Cys414 and Cys392–Cys431.

This sequence belongs to the peptidase C13 family. Homodimer before autocatalytic removal of the propeptide. Monomer after autocatalytic processing. May interact with integrins. Activated by autocatalytic processing at pH 4. As to expression, detected in kidney cortex (at protein level).

The protein resides in the lysosome. It carries out the reaction Hydrolysis of proteins and small molecule substrates at -Asn-|-Xaa- bonds.. In terms of biological role, has a strict specificity for hydrolysis of asparaginyl bonds. Can also cleave aspartyl bonds slowly, especially under acidic conditions. Involved in the processing of proteins for MHC class II antigen presentation in the lysosomal/endosomal system. Also involved in MHC class I antigen presentation in cross-presenting dendritic cells by mediating cleavage and maturation of Perforin-2 (MPEG1), thereby promoting antigen translocation in the cytosol. Required for normal lysosomal protein degradation in renal proximal tubules. Required for normal degradation of internalized EGFR. Plays a role in the regulation of cell proliferation via its role in EGFR degradation. The chain is Legumain (Lgmn) from Rattus norvegicus (Rat).